The following is a 96-amino-acid chain: Co-chaperonin GroES (96 aa).

Belongs to the GroES chaperonin family. As to quaternary structure, heptamer of 7 subunits arranged in a ring. Interacts with the chaperonin GroEL.

Its subcellular location is the cytoplasm. Functionally, together with the chaperonin GroEL, plays an essential role in assisting protein folding. The GroEL-GroES system forms a nano-cage that allows encapsulation of the non-native substrate proteins and provides a physical environment optimized to promote and accelerate protein folding. GroES binds to the apical surface of the GroEL ring, thereby capping the opening of the GroEL channel. The chain is Co-chaperonin GroES from Nitrosococcus oceani (strain ATCC 19707 / BCRC 17464 / JCM 30415 / NCIMB 11848 / C-107).